Consider the following 223-residue polypeptide: Proteasome subunit beta type-1 (223 aa).

This sequence belongs to the peptidase T1B family. In terms of assembly, component of the 20S core complex of the 26S proteasome. The 26S proteasome is composed of a core protease (CP), known as the 20S proteasome, capped at one or both ends by the 19S regulatory particle (RP/PA700). The 20S proteasome core is composed of 28 subunits that are arranged in four stacked rings, resulting in a barrel-shaped structure. The two end rings are each formed by seven alpha subunits, and the two central rings are each formed by seven beta subunits. The catalytic chamber with the active sites is on the inside of the barrel. Present in all tissues examined. Slightly lower levels in roots.

The protein resides in the cytoplasm. Its subcellular location is the nucleus. In terms of biological role, non-catalytic component of the proteasome, a multicatalytic proteinase complex which is characterized by its ability to cleave peptides with Arg, Phe, Tyr, Leu, and Glu adjacent to the leaving group at neutral or slightly basic pH. The proteasome has an ATP-dependent proteolytic activity. The polypeptide is Proteasome subunit beta type-1 (PBF1) (Arabidopsis thaliana (Mouse-ear cress)).